The chain runs to 424 residues: MFRLSSGLLKGGACASRSRIPQLGRSLYSTATSAGADKTQGKIHTVIGAVVDVQFNHGRLPPILNALETTNQGKKLVLEVAQHLGEHTVRCIAMDGTEGLVRGTAVADTGNPIMVPVGPATLGRIMNVTGDPIDERGPIEGVRLMPIHTEPPAYTEQSTHAEILVTGIKVVDLLAPYARGGKIGLFGGAGVGKTVFIQELINNIAKAHGGYSVFTGVGERTREGNDLYHEMQETGVIKLDGDSKVALVFGQMNEPPGARARVALTGLTIAEYFRDEGQDVLLFIDNIFRFTQAGSEVSALLGRIPSAVGYQPTLAVDMGAMQERITTTTKGSITSVQAVYVPADDLTDPAPATTFIHLDATTELSRGISELGIYPAVDPLGSKSRLMDPRIVGEEHYDTAMRVQRTLQEYKSLQDIIAILAGVA.

The transit peptide at methionine 1–leucine 60 directs the protein to the mitochondrion. Residues glycine 187–threonine 194, glycine 188–valine 195, glutamate 219–arginine 220, and tyrosine 374 contribute to the ATP site.

It belongs to the ATPase alpha/beta chains family. In terms of assembly, F-type ATPases have 2 components, CF(1) - the catalytic core - and CF(0) - the membrane proton channel. CF(1) has five subunits: alpha(3), beta(3), gamma(1), delta(1), epsilon(1). CF(0) has three main subunits: a, b and c.

The protein localises to the mitochondrion. The protein resides in the mitochondrion inner membrane. The catalysed reaction is ATP + H2O + 4 H(+)(in) = ADP + phosphate + 5 H(+)(out). In terms of biological role, ATP synthase subunit beta; part of the gene cluster that mediates the biosynthesis of citreoviridin, an inhibitor of the of F1-ATPase beta-subunit. Mitochondrial membrane ATP synthase (F(1)F(0) ATP synthase or Complex V) produces ATP from ADP in the presence of a proton gradient across the membrane which is generated by electron transport complexes of the respiratory chain. Whereas ctvA to ctvD constitute the core biosynthetic gene cluster, ctvE acts as a self-resistance gene. The sequence is that of ATP synthase subunit beta, mitochondrial from Aspergillus terreus (strain NIH 2624 / FGSC A1156).